Consider the following 280-residue polypeptide: MKILLDSLPFIRIFRGQIIVIKYGGAAQINPQLKEKFALDIVIMYMLGLKPVIIHGGGKRINEMLDIMGIESEFYNGYRITSAECMRVVEMVLSGEINKELTAFLNFHGAKAVGMSGKDAHLLQAKAKDNGALGYTGEITAVNPSFLLNVINDGFVPIIAPIATGEGAGHLGYNINADIAACHIAKALSAKKIIFLSDIAGVLDSNKEPISSLTPSDIKQLQKQGVINGGMIPKLEACVDCVQNGVEKAHIIDGRIEHSLLLELFTTQGIGTEIYNGQDK.

Substrate contacts are provided by residues 57 to 58, arginine 79, and asparagine 174; that span reads GG.

It belongs to the acetylglutamate kinase family. ArgB subfamily.

The protein localises to the cytoplasm. It catalyses the reaction N-acetyl-L-glutamate + ATP = N-acetyl-L-glutamyl 5-phosphate + ADP. Its pathway is amino-acid biosynthesis; L-arginine biosynthesis; N(2)-acetyl-L-ornithine from L-glutamate: step 2/4. Its function is as follows. Catalyzes the ATP-dependent phosphorylation of N-acetyl-L-glutamate. This Helicobacter hepaticus (strain ATCC 51449 / 3B1) protein is Acetylglutamate kinase.